A 481-amino-acid chain; its full sequence is Protein nucleotidyltransferase YdiU (481 aa).

The ATP site is built by glycine 85, glycine 87, arginine 88, lysine 108, aspartate 120, glycine 121, arginine 172, and arginine 179. Aspartate 248 (proton acceptor) is an active-site residue. Mg(2+) contacts are provided by asparagine 249 and aspartate 258. Aspartate 258 is an ATP binding site.

It belongs to the SELO family. Mg(2+) is required as a cofactor. It depends on Mn(2+) as a cofactor.

The catalysed reaction is L-seryl-[protein] + ATP = 3-O-(5'-adenylyl)-L-seryl-[protein] + diphosphate. The enzyme catalyses L-threonyl-[protein] + ATP = 3-O-(5'-adenylyl)-L-threonyl-[protein] + diphosphate. It carries out the reaction L-tyrosyl-[protein] + ATP = O-(5'-adenylyl)-L-tyrosyl-[protein] + diphosphate. It catalyses the reaction L-histidyl-[protein] + UTP = N(tele)-(5'-uridylyl)-L-histidyl-[protein] + diphosphate. The catalysed reaction is L-seryl-[protein] + UTP = O-(5'-uridylyl)-L-seryl-[protein] + diphosphate. The enzyme catalyses L-tyrosyl-[protein] + UTP = O-(5'-uridylyl)-L-tyrosyl-[protein] + diphosphate. Its function is as follows. Nucleotidyltransferase involved in the post-translational modification of proteins. It can catalyze the addition of adenosine monophosphate (AMP) or uridine monophosphate (UMP) to a protein, resulting in modifications known as AMPylation and UMPylation. The polypeptide is Protein nucleotidyltransferase YdiU (Cereibacter sphaeroides (strain ATCC 17029 / ATH 2.4.9) (Rhodobacter sphaeroides)).